The primary structure comprises 1412 residues: uncharacterized protein (1412 aa).

Positions methionine 1–valine 22 are disordered. Coiled-coil stretches lie at residues asparagine 317 to histidine 377 and serine 732 to glutamate 800. The interval serine 778 to valine 808 is disordered. Residues histidine 783–serine 797 are compositionally biased toward basic and acidic residues. A compositionally biased stretch (acidic residues) spans aspartate 798–valine 808.

This is an uncharacterized protein from Magallana gigas (Pacific oyster).